Consider the following 219-residue polypeptide: Antigen 5 like allergen Cul n 1 (219 aa).

An N-terminal signal peptide occupies residues 1-19 (MIKKLSIVILFSCISFVLS). Intrachain disulfides connect Cys-23–Cys-45, Cys-28–Cys-124, and Cys-55–Cys-117. One can recognise an SCP domain in the interval 73 to 211 (LKVHNRLRNK…RHSGNKYFFW (139 aa)).

The protein belongs to the CRISP family. In terms of tissue distribution, expressed in salivary glands.

It is found in the secreted. The sequence is that of Antigen 5 like allergen Cul n 1 from Culicoides nubeculosus (Biting midge).